The chain runs to 884 residues: Formin-like protein 9 (884 aa).

The N-terminal stretch at 1 to 19 (MGMAMRCVLVLFSVSPVLL) is a signal peptide. The chain crosses the membrane as a helical span at residues 140-160 (IVALGVVGLCLVVLGVVIAAF). 3 disordered regions span residues 179-204 (FHHGSRDQRSPAATRKVSSHPSPDPL), 295-318 (THDSPSDSSYQSLSPDCTSRLSPK), and 403-473 (TMTN…PLPR). Over residues 300 to 310 (SDSSYQSLSPD) the composition is skewed to low complexity. Residues 429 to 443 (KPAPPPPPQKNPPPN) are compositionally biased toward pro residues. An FH2 domain is found at 464–884 (VGKDGSPLPR…QTLNLVLPLK (421 aa)).

This sequence belongs to the formin-like family. Class-I subfamily.

It localises to the membrane. The polypeptide is Formin-like protein 9 (FH9) (Oryza sativa subsp. indica (Rice)).